A 1411-amino-acid chain; its full sequence is DNA-directed RNA polymerase subunit beta' (1411 aa).

The Zn(2+) site is built by Cys70, Cys72, Cys85, and Cys88. Residues Asp458, Asp460, and Asp462 each coordinate Mg(2+). Zn(2+) contacts are provided by Cys813, Cys887, Cys894, and Cys897. Residues 1384–1411 are disordered; it reads AEAAEMATTGSDEAPEVEGSGVESGSAE.

It belongs to the RNA polymerase beta' chain family. As to quaternary structure, the RNAP catalytic core consists of 2 alpha, 1 beta, 1 beta' and 1 omega subunit. When a sigma factor is associated with the core the holoenzyme is formed, which can initiate transcription. It depends on Mg(2+) as a cofactor. The cofactor is Zn(2+).

It catalyses the reaction RNA(n) + a ribonucleoside 5'-triphosphate = RNA(n+1) + diphosphate. Its function is as follows. DNA-dependent RNA polymerase catalyzes the transcription of DNA into RNA using the four ribonucleoside triphosphates as substrates. The sequence is that of DNA-directed RNA polymerase subunit beta' from Paracidovorax citrulli (strain AAC00-1) (Acidovorax citrulli).